A 223-amino-acid chain; its full sequence is Adenylate kinase 4, mitochondrial (223 aa).

15–20 (GSGKGT) is a binding site for a ribonucleoside 5'-triphosphate. The interval 35 to 64 (SSGHFLRENIKASTEVGEMAKQYIEKSLLV) is NMP. AMP-binding residues include Ser36 and Arg41. An N6-succinyllysine modification is found at Lys60. AMP is bound by residues 62–64 (LLV), 89–92 (GFPR), and Gln96. Positions 125 to 162 (RRWIHPPSGRVYNLDFNPPHVHGIDDVTGEPLVQQEDD) are LID. Residues Arg126 and 135-136 (VY) each bind a ribonucleoside 5'-triphosphate. An AMP-binding site is contributed by Arg170. N6-acetyllysine is present on Lys175. Residues Lys179 and Lys186 each carry the N6-acetyllysine; alternate modification. An N6-succinyllysine; alternate mark is found at Lys179 and Lys186. Thr199 contributes to the a ribonucleoside 5'-triphosphate binding site.

It belongs to the adenylate kinase family. AK3 subfamily. In terms of assembly, monomer. Interacts with SLC25A5/ANT2. As to expression, highly expressed in kidney, moderately expressed in heart and liver and weakly expressed in brain.

The protein resides in the mitochondrion matrix. The catalysed reaction is a ribonucleoside 5'-phosphate + ATP = a ribonucleoside 5'-diphosphate + ADP. It carries out the reaction AMP + ATP = 2 ADP. The enzyme catalyses GTP + AMP = GDP + ADP. It catalyses the reaction CMP + ATP = CDP + ADP. The catalysed reaction is GTP + CMP = CDP + GDP. It carries out the reaction dAMP + ATP = dADP + ADP. The enzyme catalyses dCMP + ATP = dCDP + ADP. It catalyses the reaction a 2'-deoxyribonucleoside 5'-diphosphate + ATP = a 2'-deoxyribonucleoside 5'-triphosphate + ADP. The catalysed reaction is a ribonucleoside 5'-diphosphate + ATP = a ribonucleoside 5'-triphosphate + ADP. It carries out the reaction GDP + ATP = GTP + ADP. The enzyme catalyses CDP + GTP = CTP + GDP. It catalyses the reaction CDP + ATP = CTP + ADP. The catalysed reaction is UDP + ATP = UTP + ADP. It carries out the reaction GTP + UDP = UTP + GDP. The enzyme catalyses dADP + GTP = dATP + GDP. It catalyses the reaction dCDP + GTP = dCTP + GDP. The catalysed reaction is dCDP + ATP = dCTP + ADP. It carries out the reaction dGDP + ATP = dGTP + ADP. The enzyme catalyses dTDP + GTP = dTTP + GDP. It catalyses the reaction dTDP + ATP = dTTP + ADP. In terms of biological role, broad-specificity mitochondrial nucleoside phosphate kinase involved in cellular nucleotide homeostasis by catalyzing nucleoside-phosphate interconversions. Similar to other adenylate kinases, preferentially catalyzes the phosphorylation of the nucleoside monophosphate AMP with ATP as phosphate donor to produce ADP. Phosphorylates only AMP when using GTP as phosphate donor. In vitro, can also catalyze the phosphorylation of CMP, dAMP and dCMP and use GTP as an alternate phosphate donor. Moreover, exhibits a diphosphate kinase activity, producing ATP, CTP, GTP, UTP, TTP, dATP, dCTP and dGTP from the corresponding diphosphate substrates with either ATP or GTP as phosphate donors. Plays a role in controlling cellular ATP levels by regulating phosphorylation and activation of the energy sensor protein kinase AMPK. Plays a protective role in the cellular response to oxidative stress. This chain is Adenylate kinase 4, mitochondrial, found in Homo sapiens (Human).